The sequence spans 203 residues: ATP-dependent Clp protease proteolytic subunit (203 aa).

Ser107 serves as the catalytic Nucleophile. His132 is an active-site residue.

The protein belongs to the peptidase S14 family. Fourteen ClpP subunits assemble into 2 heptameric rings which stack back to back to give a disk-like structure with a central cavity, resembling the structure of eukaryotic proteasomes.

It is found in the cytoplasm. It catalyses the reaction Hydrolysis of proteins to small peptides in the presence of ATP and magnesium. alpha-casein is the usual test substrate. In the absence of ATP, only oligopeptides shorter than five residues are hydrolyzed (such as succinyl-Leu-Tyr-|-NHMec, and Leu-Tyr-Leu-|-Tyr-Trp, in which cleavage of the -Tyr-|-Leu- and -Tyr-|-Trp bonds also occurs).. In terms of biological role, cleaves peptides in various proteins in a process that requires ATP hydrolysis. Has a chymotrypsin-like activity. Plays a major role in the degradation of misfolded proteins. This Shewanella loihica (strain ATCC BAA-1088 / PV-4) protein is ATP-dependent Clp protease proteolytic subunit.